Here is a 452-residue protein sequence, read N- to C-terminus: Tubulin gamma chain (452 aa).

142-148 contacts GTP; that stretch reads AGGTGSG.

Belongs to the tubulin family.

It is found in the cytoplasm. Its subcellular location is the cytoskeleton. The protein localises to the microtubule organizing center. It localises to the centrosome. Tubulin is the major constituent of microtubules. The gamma chain is found at microtubule organizing centers (MTOC) such as the spindle poles or the centrosome, suggesting that it is involved in the minus-end nucleation of microtubule assembly. This chain is Tubulin gamma chain (G-TUB), found in Plasmodium falciparum (isolate NF54).